The primary structure comprises 154 residues: Myoglobin (154 aa).

Residues 2 to 148 (GLSDQEWQQV…FRNDMASKYK (147 aa)) form the Globin domain. His65 provides a ligand contact to nitrite. His65 is an O2 binding site. Heme b is bound at residue His94.

The protein belongs to the globin family. Monomeric.

It is found in the cytoplasm. Its subcellular location is the sarcoplasm. The enzyme catalyses Fe(III)-heme b-[protein] + nitric oxide + H2O = Fe(II)-heme b-[protein] + nitrite + 2 H(+). It catalyses the reaction H2O2 + AH2 = A + 2 H2O. Monomeric heme protein which primary function is to store oxygen and facilitate its diffusion within muscle tissues. Reversibly binds oxygen through a pentacoordinated heme iron and enables its timely and efficient release as needed during periods of heightened demand. Depending on the oxidative conditions of tissues and cells, and in addition to its ability to bind oxygen, it also has a nitrite reductase activity whereby it regulates the production of bioactive nitric oxide. Under stress conditions, like hypoxia and anoxia, it also protects cells against reactive oxygen species thanks to its pseudoperoxidase activity. This is Myoglobin (MB) from Gallus gallus (Chicken).